The chain runs to 1716 residues: DNA-directed RNA polymerase I subunit RPA1 (1716 aa).

The Zn(2+) site is built by Cys64, Cys67, Cys74, His77, Cys104, and Cys107. The clamp stretch occupies residues Leu110–Ala201. Residues Cys205 and Cys208 each contribute to the Zn(2+) site. The segment at Phe327 to Gly433 is clamp. The rudder stretch occupies residues Asp410–Gly423. 3 residues coordinate DNA: Lys431, Arg436, and Arg443. Positions Tyr475–Val549 are involved in RRN3 binding to Pol I complex. Residue Arg559 participates in RNA binding. Positions 595, 597, and 599 each coordinate Mg(2+). An RNA-binding site is contributed by Asp599. Residues Lys812–Phe890 are funnel. The interval Arg967 to Ile1008 is bridging helix. The tract at residues Ala1067–His1162 is mediates the interaction with TOP2A. The interval Pro1214–Leu1255 is trigger loop. Residue Arg1256 coordinates DNA. The tract at residues Ala1368–Ala1493 is disordered. The span at Thr1380–Glu1397 shows a compositional bias: basic and acidic residues. 2 stretches are compositionally biased toward acidic residues: residues Glu1398 to Ala1419 and Glu1429 to Glu1451. The span at Glu1452–Glu1464 shows a compositional bias: basic and acidic residues. A compositionally biased stretch (acidic residues) spans Pro1465–Ser1477.

Belongs to the RNA polymerase beta' chain family. Component of the RNA polymerase I (Pol I) complex consisting of 13 subunits: a ten-subunit catalytic core composed of POLR1A/RPA1, POLR1B/RPA2, POLR1C/RPAC1, POLR1D/RPAC2, POLR1H/RPA12, POLR2E/RPABC1, POLR2F/RPABC2, POLR2H/RPABC3, POLR2K/RPABC4 and POLR2L/RPABC5; a mobile stalk subunit POLR1F/RPA43 protruding from the core and additional subunits homologous to general transcription factors POLR1E/RPA49 and POLR1G/RPA34. Part of Pol I pre-initiation complex (PIC), in which Pol I core assembles with RRN3 and promoter-bound UTBF and SL1/TIF-IB complex. Interacts (via dock II domain) with TOP2A; this interaction may assist Pol I transcription initiation by releasing supercoils occurring during DNA unwinding. Interacts with CAVIN1; this interaction induces the dissociation of Pol I complex paused at rDNA terminator sequences. Interacts with MYO1C. Interacts with ERBB2. Interacts with DDX11. Interacts with RECQL5. It depends on Mg(2+) as a cofactor. Phosphorylated.

The protein localises to the nucleus. It is found in the nucleolus. Its subcellular location is the chromosome. The catalysed reaction is RNA(n) + a ribonucleoside 5'-triphosphate = RNA(n+1) + diphosphate. Functionally, catalytic core component of RNA polymerase I (Pol I), a DNA-dependent RNA polymerase which synthesizes ribosomal RNA precursors using the four ribonucleoside triphosphates as substrates. Transcribes 47S pre-rRNAs from multicopy rRNA gene clusters, giving rise to 5.8S, 18S and 28S ribosomal RNAs. Pol I-mediated transcription cycle proceeds through transcription initiation, transcription elongation and transcription termination stages. During transcription initiation, Pol I pre-initiation complex (PIC) is recruited by the selectivity factor 1 (SL1/TIF-IB) complex bound to the core promoter that precedes an rDNA repeat unit. The PIC assembly bends the promoter favoring the formation of the transcription bubble and promoter escape. Once the polymerase has escaped from the promoter it enters the elongation phase during which RNA is actively polymerized, based on complementarity with the template DNA strand. Highly processive, assembles in structures referred to as 'Miller trees' where many elongating Pol I complexes queue and transcribe the same rDNA coding regions. At terminator sequences downstream of the rDNA gene, PTRF interacts with Pol I and halts Pol I transcription leading to the release of the RNA transcript and polymerase from the DNA. Forms Pol I active center together with the second largest subunit POLR1B/RPA2. Appends one nucleotide at a time to the 3' end of the nascent RNA, with POLR1A/RPA1 contributing a Mg(2+)-coordinating DxDGD motif, and POLR1B/RPA2 participating in the coordination of a second Mg(2+) ion and providing lysine residues believed to facilitate Watson-Crick base pairing between the incoming nucleotide and the template base. Typically, Mg(2+) ions direct a 5' nucleoside triphosphate to form a phosphodiester bond with the 3' hydroxyl of the preceding nucleotide of the nascent RNA, with the elimination of pyrophosphate. Has proofreading activity: Pauses and backtracks to allow the cleavage of a missincorporated nucleotide via POLR1H/RPA12. High Pol I processivity is associated with decreased transcription fidelity. In Rattus norvegicus (Rat), this protein is DNA-directed RNA polymerase I subunit RPA1.